We begin with the raw amino-acid sequence, 545 residues long: Capsular polysaccharide phosphotransferase SacB (545 aa).

This sequence belongs to the stealth family.

May be the polymerase that links individual UDP-N-acetyl-D-mannosamine monomers. In serotype A the capsule is composed of repeated units of (alpha 1-6)-linked N-acetyl-D-mannosamine-1-phosphate. This chain is Capsular polysaccharide phosphotransferase SacB (sacB), found in Neisseria meningitidis serogroup A.